Reading from the N-terminus, the 513-residue chain is Sterol 14-alpha demethylase (513 aa).

Residues 10–30 (FTLVSAYAAAGLLAIIVLNLL) form a helical membrane-spanning segment. N-linked (GlcNAc...) asparagine glycans are attached at residues N37 and N406. C453 is a binding site for heme.

This sequence belongs to the cytochrome P450 family. Requires heme as cofactor.

It localises to the endoplasmic reticulum membrane. The catalysed reaction is a 14alpha-methyl steroid + 3 reduced [NADPH--hemoprotein reductase] + 3 O2 = a Delta(14) steroid + formate + 3 oxidized [NADPH--hemoprotein reductase] + 4 H2O + 4 H(+). The enzyme catalyses a 14alpha-methyl steroid + reduced [NADPH--hemoprotein reductase] + O2 = a 14alpha-hydroxymethyl steroid + oxidized [NADPH--hemoprotein reductase] + H2O + H(+). It carries out the reaction a 14alpha-hydroxymethyl steroid + reduced [NADPH--hemoprotein reductase] + O2 = a 14alpha-formyl steroid + oxidized [NADPH--hemoprotein reductase] + 2 H2O + H(+). It catalyses the reaction a 14alpha-formyl steroid + reduced [NADPH--hemoprotein reductase] + O2 = a Delta(14) steroid + formate + oxidized [NADPH--hemoprotein reductase] + H2O + 2 H(+). The catalysed reaction is lanosterol + 3 reduced [NADPH--hemoprotein reductase] + 3 O2 = 4,4-dimethyl-5alpha-cholesta-8,14,24-trien-3beta-ol + formate + 3 oxidized [NADPH--hemoprotein reductase] + 4 H2O + 4 H(+). The enzyme catalyses lanosterol + reduced [NADPH--hemoprotein reductase] + O2 = 32-hydroxylanosterol + oxidized [NADPH--hemoprotein reductase] + H2O + H(+). It carries out the reaction 32-hydroxylanosterol + reduced [NADPH--hemoprotein reductase] + O2 = 32-oxolanosterol + oxidized [NADPH--hemoprotein reductase] + 2 H2O + H(+). It catalyses the reaction 32-oxolanosterol + reduced [NADPH--hemoprotein reductase] + O2 = 4,4-dimethyl-5alpha-cholesta-8,14,24-trien-3beta-ol + formate + oxidized [NADPH--hemoprotein reductase] + H2O + 2 H(+). The catalysed reaction is eburicol + 3 reduced [NADPH--hemoprotein reductase] + 3 O2 = 14-demethyleburicol + formate + 3 oxidized [NADPH--hemoprotein reductase] + 4 H2O + 4 H(+). The enzyme catalyses eburicol + reduced [NADPH--hemoprotein reductase] + O2 = 32-hydroxyeburicol + oxidized [NADPH--hemoprotein reductase] + H2O + H(+). It carries out the reaction 32-hydroxyeburicol + reduced [NADPH--hemoprotein reductase] + O2 = 32-oxoeburicol + oxidized [NADPH--hemoprotein reductase] + 2 H2O + H(+). It catalyses the reaction 32-oxoeburicol + reduced [NADPH--hemoprotein reductase] + O2 = 14-demethyleburicol + formate + oxidized [NADPH--hemoprotein reductase] + H2O + 2 H(+). It functions in the pathway steroid biosynthesis; sterol biosynthesis. Its function is as follows. Sterol 14alpha-demethylase, encoded by cyp51A, cyp51B and cyp51C, that plays a critical role in the third module of ergosterol biosynthesis pathway, being ergosterol the major sterol component in fungal membranes that participates in a variety of functions. The third module or late pathway involves the ergosterol synthesis itself through consecutive reactions that mainly occur in the endoplasmic reticulum (ER) membrane. In filamentous fungi, during the initial step of this module, lanosterol (lanosta-8,24-dien-3beta-ol) can be metabolized to eburicol. Sterol 14alpha-demethylase catalyzes the three-step oxidative removal of the 14alpha-methyl group (C-32) of both these sterols in the form of formate, and converts eburicol and lanosterol to 14-demethyleburicol (4,4,24-trimethylergosta-8,14,24(28)-trienol) and 4,4-dimethyl-5alpha-cholesta-8,14,24-trien-3beta-ol, respectively, which are further metabolized by other enzymes in the pathway to ergosterol. Can also use substrates not intrinsic to fungi, such as 24,25-dihydrolanosterol (DHL), producing 4,4'-dimethyl-8,14-cholestadien-3-beta-ol, but at lower rates than the endogenous substrates. Functionally, as a target of azole drugs, plays a crucial role in azole susceptibility. The sequence is that of Sterol 14-alpha demethylase from Aspergillus flavus (strain ATCC 200026 / FGSC A1120 / IAM 13836 / NRRL 3357 / JCM 12722 / SRRC 167).